The primary structure comprises 166 residues: Lymphocyte antigen 6G6e (166 aa).

A signal peptide spans Met-1 to Gly-18. The UPAR/Ly6 domain maps to Leu-28 to Leu-151. 4 cysteine pairs are disulfide-bonded: Cys-30–Cys-52, Cys-33–Cys-39, Cys-110–Cys-129, and Cys-130–Cys-135.

As to quaternary structure, interacts with CHRNA4. Post-translationally, O-glycosylated. Contains sialic acid residues.

It is found in the cell surface. It localises to the cell membrane. The protein localises to the cell projection. In terms of biological role, believed to act as a modulator of nicotinic acetylcholine receptors (nAChRs) activity. In vitro potentiates alpha-3:beta-4-containing nAChRs maximum response by increasing peak current and slowing down receptor desensitization; the activity is dependent on its cell surface localization. This is Lymphocyte antigen 6G6e (Ly6g6e) from Mus musculus (Mouse).